The following is a 179-amino-acid chain: Putative 5'(3')-deoxyribonucleotidase (179 aa).

Catalysis depends on Asp-9, which acts as the Nucleophile. Mg(2+) contacts are provided by Asp-9, Asp-11, and Asp-135. Asp-11 (proton donor) is an active-site residue.

Belongs to the 5'(3')-deoxyribonucleotidase family. Mg(2+) serves as cofactor.

Functionally, dephosphorylates the 5' and 2'(3')-phosphates of deoxyribonucleotides. This is Putative 5'(3')-deoxyribonucleotidase from Staphylococcus epidermidis (strain ATCC 35984 / DSM 28319 / BCRC 17069 / CCUG 31568 / BM 3577 / RP62A).